A 343-amino-acid polypeptide reads, in one-letter code: N-acetyl-gamma-glutamyl-phosphate reductase (343 aa).

The active site involves cysteine 149.

Belongs to the NAGSA dehydrogenase family. Type 1 subfamily.

The protein localises to the cytoplasm. The catalysed reaction is N-acetyl-L-glutamate 5-semialdehyde + phosphate + NADP(+) = N-acetyl-L-glutamyl 5-phosphate + NADPH + H(+). Its pathway is amino-acid biosynthesis; L-arginine biosynthesis; N(2)-acetyl-L-ornithine from L-glutamate: step 3/4. Its function is as follows. Catalyzes the NADPH-dependent reduction of N-acetyl-5-glutamyl phosphate to yield N-acetyl-L-glutamate 5-semialdehyde. The sequence is that of N-acetyl-gamma-glutamyl-phosphate reductase from Alkalilimnicola ehrlichii (strain ATCC BAA-1101 / DSM 17681 / MLHE-1).